The primary structure comprises 150 residues: Ribosomal RNA large subunit methyltransferase H (150 aa).

S-adenosyl-L-methionine contacts are provided by residues leucine 71, glycine 100, and 118–123 (FSQMTF).

The protein belongs to the RNA methyltransferase RlmH family. In terms of assembly, homodimer.

Its subcellular location is the cytoplasm. The enzyme catalyses pseudouridine(1915) in 23S rRNA + S-adenosyl-L-methionine = N(3)-methylpseudouridine(1915) in 23S rRNA + S-adenosyl-L-homocysteine + H(+). Functionally, specifically methylates the pseudouridine at position 1915 (m3Psi1915) in 23S rRNA. The protein is Ribosomal RNA large subunit methyltransferase H of Mycoplasmopsis agalactiae (strain NCTC 10123 / CIP 59.7 / PG2) (Mycoplasma agalactiae).